We begin with the raw amino-acid sequence, 218 residues long: Thiamine-phosphate synthase (218 aa).

Residues 46 to 50 (QFRDK) and aspartate 83 contribute to the 4-amino-2-methyl-5-(diphosphooxymethyl)pyrimidine site. Residues aspartate 84 and aspartate 103 each coordinate Mg(2+). Residue serine 122 participates in 4-amino-2-methyl-5-(diphosphooxymethyl)pyrimidine binding. 149-151 (TNS) is a 2-[(2R,5Z)-2-carboxy-4-methylthiazol-5(2H)-ylidene]ethyl phosphate binding site. Residue lysine 152 coordinates 4-amino-2-methyl-5-(diphosphooxymethyl)pyrimidine. Residues glycine 181 and 201-202 (IT) each bind 2-[(2R,5Z)-2-carboxy-4-methylthiazol-5(2H)-ylidene]ethyl phosphate.

The protein belongs to the thiamine-phosphate synthase family. Mg(2+) is required as a cofactor.

The enzyme catalyses 2-[(2R,5Z)-2-carboxy-4-methylthiazol-5(2H)-ylidene]ethyl phosphate + 4-amino-2-methyl-5-(diphosphooxymethyl)pyrimidine + 2 H(+) = thiamine phosphate + CO2 + diphosphate. The catalysed reaction is 2-(2-carboxy-4-methylthiazol-5-yl)ethyl phosphate + 4-amino-2-methyl-5-(diphosphooxymethyl)pyrimidine + 2 H(+) = thiamine phosphate + CO2 + diphosphate. It carries out the reaction 4-methyl-5-(2-phosphooxyethyl)-thiazole + 4-amino-2-methyl-5-(diphosphooxymethyl)pyrimidine + H(+) = thiamine phosphate + diphosphate. It participates in cofactor biosynthesis; thiamine diphosphate biosynthesis; thiamine phosphate from 4-amino-2-methyl-5-diphosphomethylpyrimidine and 4-methyl-5-(2-phosphoethyl)-thiazole: step 1/1. Condenses 4-methyl-5-(beta-hydroxyethyl)thiazole monophosphate (THZ-P) and 2-methyl-4-amino-5-hydroxymethyl pyrimidine pyrophosphate (HMP-PP) to form thiamine monophosphate (TMP). In Actinobacillus pleuropneumoniae serotype 7 (strain AP76), this protein is Thiamine-phosphate synthase.